A 512-amino-acid polypeptide reads, in one-letter code: ATP synthase subunit alpha (512 aa).

Residue 169–176 participates in ATP binding; sequence GDRQTGKT.

The protein belongs to the ATPase alpha/beta chains family. F-type ATPases have 2 components, CF(1) - the catalytic core - and CF(0) - the membrane proton channel. CF(1) has five subunits: alpha(3), beta(3), gamma(1), delta(1), epsilon(1). CF(0) has three main subunits: a(1), b(2) and c(9-12). The alpha and beta chains form an alternating ring which encloses part of the gamma chain. CF(1) is attached to CF(0) by a central stalk formed by the gamma and epsilon chains, while a peripheral stalk is formed by the delta and b chains.

The protein resides in the cell inner membrane. It carries out the reaction ATP + H2O + 4 H(+)(in) = ADP + phosphate + 5 H(+)(out). Functionally, produces ATP from ADP in the presence of a proton gradient across the membrane. The alpha chain is a regulatory subunit. The protein is ATP synthase subunit alpha of Rickettsia canadensis (strain McKiel).